The following is a 98-amino-acid chain: Co-chaperonin GroES 3 (98 aa).

It belongs to the GroES chaperonin family. As to quaternary structure, heptamer of 7 subunits arranged in a ring. Interacts with the chaperonin GroEL.

Its subcellular location is the cytoplasm. In terms of biological role, together with the chaperonin GroEL, plays an essential role in assisting protein folding. The GroEL-GroES system forms a nano-cage that allows encapsulation of the non-native substrate proteins and provides a physical environment optimized to promote and accelerate protein folding. GroES binds to the apical surface of the GroEL ring, thereby capping the opening of the GroEL channel. The sequence is that of Co-chaperonin GroES 3 from Mesorhizobium japonicum (strain LMG 29417 / CECT 9101 / MAFF 303099) (Mesorhizobium loti (strain MAFF 303099)).